Consider the following 202-residue polypeptide: Segregation and condensation protein B (202 aa).

Belongs to the ScpB family. In terms of assembly, homodimer. Homodimerization may be required to stabilize the binding of ScpA to the Smc head domains. Component of a cohesin-like complex composed of ScpA, ScpB and the Smc homodimer, in which ScpA and ScpB bind to the head domain of Smc. The presence of the three proteins is required for the association of the complex with DNA.

Its subcellular location is the cytoplasm. Its function is as follows. Participates in chromosomal partition during cell division. May act via the formation of a condensin-like complex containing Smc and ScpA that pull DNA away from mid-cell into both cell halves. This Clostridium acetobutylicum (strain ATCC 824 / DSM 792 / JCM 1419 / IAM 19013 / LMG 5710 / NBRC 13948 / NRRL B-527 / VKM B-1787 / 2291 / W) protein is Segregation and condensation protein B.